A 562-amino-acid chain; its full sequence is Ikaros family zinc finger protein (562 aa).

3 consecutive C2H2-type zinc fingers follow at residues 45–67 (IKCE…IRSH), 73–95 (FKCH…YKIH), and 101–123 (FQCP…MRIH). The C2H2-type 4; degenerate zinc finger occupies 129–152 (YRCSYCARSYKSRQSMKEHEYQCP). Disordered regions lie at residues 178-210 (NPLA…PPYP), 293-342 (QNQQ…VKPT), 361-404 (QLED…KEDD), and 451-473 (DESK…STQD). Over residues 307–326 (PSLSEATPSSHSSHSSAEDS) the composition is skewed to low complexity. A compositionally biased stretch (polar residues) spans 327-336 (GQVNKFSPTE). Over residues 369 to 383 (DSRKRPHSFESEPTP) the composition is skewed to basic and acidic residues. Residues 456-471 (EISSVDSRSPLDQSST) show a composition bias toward polar residues. 2 consecutive C2H2-type zinc fingers follow at residues 494-516 (WECK…MGVH) and 522-546 (LVCN…HHQH).

It belongs to the Ikaros C2H2-type zinc-finger protein family. In terms of tissue distribution, expression is strongest in the anterior Fol cells of the oikoplastic epithelium.

The protein resides in the nucleus. The sequence is that of Ikaros family zinc finger protein from Oikopleura dioica (Tunicate).